A 96-amino-acid polypeptide reads, in one-letter code: Co-chaperonin GroES (96 aa).

It belongs to the GroES chaperonin family. As to quaternary structure, heptamer of 7 subunits arranged in a ring. Interacts with the chaperonin GroEL.

It is found in the cytoplasm. Functionally, together with the chaperonin GroEL, plays an essential role in assisting protein folding. The GroEL-GroES system forms a nano-cage that allows encapsulation of the non-native substrate proteins and provides a physical environment optimized to promote and accelerate protein folding. GroES binds to the apical surface of the GroEL ring, thereby capping the opening of the GroEL channel. In Allochromatium vinosum (Chromatium vinosum), this protein is Co-chaperonin GroES.